A 190-amino-acid chain; its full sequence is Prostaglandin-H2 D-isomerase (190 aa).

Positions 1-22 (MATHHTLWMGLALLGVLGDLQA) are cleaved as a signal peptide. Residue N51 is glycosylated (N-linked (GlcNAc...) asparagine). C65 acts as the Nucleophile in catalysis. An N-linked (GlcNAc...) asparagine glycan is attached at N78. The cysteines at positions 89 and 186 are disulfide-linked.

It belongs to the calycin superfamily. Lipocalin family. As to quaternary structure, monomer.

It is found in the rough endoplasmic reticulum. It localises to the nucleus membrane. The protein resides in the golgi apparatus. Its subcellular location is the cytoplasm. The protein localises to the perinuclear region. It is found in the secreted. It carries out the reaction prostaglandin H2 = prostaglandin D2. Its function is as follows. Catalyzes the conversion of PGH2 to PGD2, a prostaglandin involved in smooth muscle contraction/relaxation and a potent inhibitor of platelet aggregation. Involved in a variety of CNS functions, such as sedation, NREM sleep and PGE2-induced allodynia, and may have an anti-apoptotic role in oligodendrocytes. Binds small non-substrate lipophilic molecules, including biliverdin, bilirubin, retinal, retinoic acid and thyroid hormone, and may act as a scavenger for harmful hydrophobic molecules and as a secretory retinoid and thyroid hormone transporter. Possibly involved in development and maintenance of the blood-brain, blood-retina, blood-aqueous humor and blood-testis barrier. It is likely to play important roles in both maturation and maintenance of the central nervous system and male reproductive system. Involved in PLA2G3-dependent maturation of mast cells. PLA2G3 is secreted by immature mast cells and acts on nearby fibroblasts upstream to PTDGS to synthesize PGD2, which in turn promotes mast cell maturation and degranulation via PTGDR. This is Prostaglandin-H2 D-isomerase (PTGDS) from Gorilla gorilla gorilla (Western lowland gorilla).